The primary structure comprises 199 residues: COMM domain-containing protein 2 (199 aa).

In terms of domain architecture, COMM spans 123–190 (SYHNLEWRLD…QALEEMKTNH (68 aa)).

Belongs to the COMM domain-containing protein 2 family. As to quaternary structure, component of the commander complex consisting of the CCC subcomplex and the retriever subcomplex. Component of the CCC (COMMD/CCDC22/CCDC93) subcomplex consisting of COMMD1, COMMD2, COMMD3, COMMD4, COMMD5, COMMD6, COMMD7, COMMD8, COMMD9, COMMD10, CCDC22 and CCDC93; within the complex forms a heterodimer with COMMD3. Interacts with RELA, RELB, NFKB1/p105, NFKB2/p100. Interacts with CCDC22, CCDC93, SCNN1B, CUL3, CUL4B, CUL5, CUL7. Ubiquitous.

The protein resides in the cytoplasm. In terms of biological role, scaffold protein in the commander complex that is essential for endosomal recycling of transmembrane cargos; the commander complex is composed of the CCC subcomplex and the retriever subcomplex. May modulate activity of cullin-RING E3 ubiquitin ligase (CRL) complexes. May down-regulate activation of NF-kappa-B. The sequence is that of COMM domain-containing protein 2 (COMMD2) from Homo sapiens (Human).